We begin with the raw amino-acid sequence, 23 residues long: Thylakoid lumenal 17.4 kDa protein (23 aa).

Residues 1–23 are disordered; the sequence is ANQRLPPLSNDPDRCERAFVGNT.

The protein resides in the plastid. It is found in the chloroplast thylakoid lumen. This is Thylakoid lumenal 17.4 kDa protein from Spinacia oleracea (Spinach).